We begin with the raw amino-acid sequence, 205 residues long: RPW8-like protein 2 (205 aa).

One can recognise an RPW8 domain in the interval 1 to 153 (MPLTEIIAGA…IMGQPIDCII (153 aa)). The helical transmembrane segment at 7-23 (IAGAALGLALQILHEAI) threads the bilayer. Coiled-coil stretches lie at residues 70–92 (EDLK…LKRR) and 125–147 (ADIK…IMGQ).

It belongs to the plant RPW8 protein family.

It is found in the membrane. Probable disease resistance (R) protein. This Arabidopsis thaliana (Mouse-ear cress) protein is RPW8-like protein 2.